The following is an 85-amino-acid chain: Small ribosomal subunit protein bS20 (85 aa).

The disordered stretch occupies residues 1-25 (MANIKSAIKRAKLSEERRAHNASIK).

It belongs to the bacterial ribosomal protein bS20 family.

Binds directly to 16S ribosomal RNA. The chain is Small ribosomal subunit protein bS20 from Bacillus anthracis (strain A0248).